The sequence spans 1036 residues: Ubiquitin carboxyl-terminal hydrolase 48 (1036 aa).

A USP domain is found at 89-421; the sequence is VGLTNLGASC…NAYMLVYRLQ (333 aa). Catalysis depends on cysteine 98, which acts as the Nucleophile. Histidine 353 functions as the Proton acceptor in the catalytic mechanism. DUSP domains lie at 460 to 554, 569 to 692, and 712 to 825; these read QSVD…KALC, NQLN…YKEC, and MIAK…RIEV. Residues 611–644 form a disordered region; that stretch reads DEQDGEAEQSNGKINGSPFSKDESKEEKKEEEEE. The span at 618–628 shows a compositional bias: polar residues; that stretch reads EQSNGKINGSP. The interval 881–924 is disordered; sequence APELNVSSSETEEDKEEAKPDGEKDPDFNQSNGGTKRQKTSQQG. Serine 887, serine 888, and serine 889 each carry phosphoserine. A compositionally biased stretch (basic and acidic residues) spans 896–907; it reads EEAKPDGEKDPD. The span at 908-924 shows a compositional bias: polar residues; the sequence is FNQSNGGTKRQKTSQQG. The 81-residue stretch at 930–1010 folds into the Ubiquitin-like domain; that stretch reads KQVIRRSTRH…ILLKADEPIA (81 aa). Lysine 957 carries the N6-acetyllysine modification.

Belongs to the peptidase C19 family. Interacts with TRAF2 and RELA. Interacts with GPS1. In terms of tissue distribution, present in the brain, in particular in the postsynaptic density and the dendritic lipid raft fractions (at protein level).

It localises to the cytoplasm. The protein localises to the nucleus. Its subcellular location is the cell projection. It is found in the cilium. The catalysed reaction is Thiol-dependent hydrolysis of ester, thioester, amide, peptide and isopeptide bonds formed by the C-terminal Gly of ubiquitin (a 76-residue protein attached to proteins as an intracellular targeting signal).. Deubiquitinase that recognizes and hydrolyzes the peptide bond at the C-terminal Gly of ubiquitin. Involved in the processing of polyubiquitin precursors as well as that of ubiquitinated proteins. Plays a role in the regulation of NF-kappa-B activation by TNF receptor superfamily via its interactions with RELA and TRAF2. May also play a regulatory role at postsynaptic sites. Plays an important role in cell cycle progression by deubiquitinating Aurora B/AURKB and thereby extending its stability. In the context of H. pylori infection, stabilizes nuclear RELA through deubiquitination, thereby promoting the transcriptional activity of RELA to prolong TNFAIP3 de novo synthesis. Consequently, TNFAIP3 suppresses caspase activity and apoptotic cell death. Also functions in the modulation of the ciliary and synaptic transport as well as cytoskeleton organization, which are key for photoreceptor function and homeostasis. To achieve this, stabilizes the levels of the retinal degeneration-associated proteins ARL3 and UNC119 using distinct mechanisms. Plays a positive role in pyroptosis by stabilizing gasdermin E/GSDME through removal of its 'Lys-48'-linked ubiquitination. The polypeptide is Ubiquitin carboxyl-terminal hydrolase 48 (Usp48) (Rattus norvegicus (Rat)).